Consider the following 335-residue polypeptide: tRNA N6-adenosine threonylcarbamoyltransferase (335 aa).

2 residues coordinate Fe cation: His112 and His116. Substrate-binding positions include 134–138 (VVSGG), Asp167, Gly180, and Asn273. Position 301 (Asp301) interacts with Fe cation.

This sequence belongs to the KAE1 / TsaD family. Requires Fe(2+) as cofactor.

The protein resides in the cytoplasm. It carries out the reaction L-threonylcarbamoyladenylate + adenosine(37) in tRNA = N(6)-L-threonylcarbamoyladenosine(37) in tRNA + AMP + H(+). Required for the formation of a threonylcarbamoyl group on adenosine at position 37 (t(6)A37) in tRNAs that read codons beginning with adenine. Is involved in the transfer of the threonylcarbamoyl moiety of threonylcarbamoyl-AMP (TC-AMP) to the N6 group of A37, together with TsaE and TsaB. TsaD likely plays a direct catalytic role in this reaction. The polypeptide is tRNA N6-adenosine threonylcarbamoyltransferase (Shouchella clausii (strain KSM-K16) (Alkalihalobacillus clausii)).